Here is a 205-residue protein sequence, read N- to C-terminus: Holliday junction branch migration complex subunit RuvA (205 aa).

A domain I region spans residues 1–64 (MIGKLKGVID…EDQIKLFGFR (64 aa)). The interval 65-143 (SDIEREWFRL…AFANVDPAVV (79 aa)) is domain II. A flexible linker region spans residues 144–154 (HLAGAVDDDRA). The interval 154–205 (APRPVKDAISALVNLGYGQPQAAAAIASVARDAGEGAETAQLIRLGLKELAK) is domain III.

The protein belongs to the RuvA family. As to quaternary structure, homotetramer. Forms an RuvA(8)-RuvB(12)-Holliday junction (HJ) complex. HJ DNA is sandwiched between 2 RuvA tetramers; dsDNA enters through RuvA and exits via RuvB. An RuvB hexamer assembles on each DNA strand where it exits the tetramer. Each RuvB hexamer is contacted by two RuvA subunits (via domain III) on 2 adjacent RuvB subunits; this complex drives branch migration. In the full resolvosome a probable DNA-RuvA(4)-RuvB(12)-RuvC(2) complex forms which resolves the HJ.

Its subcellular location is the cytoplasm. In terms of biological role, the RuvA-RuvB-RuvC complex processes Holliday junction (HJ) DNA during genetic recombination and DNA repair, while the RuvA-RuvB complex plays an important role in the rescue of blocked DNA replication forks via replication fork reversal (RFR). RuvA specifically binds to HJ cruciform DNA, conferring on it an open structure. The RuvB hexamer acts as an ATP-dependent pump, pulling dsDNA into and through the RuvAB complex. HJ branch migration allows RuvC to scan DNA until it finds its consensus sequence, where it cleaves and resolves the cruciform DNA. The sequence is that of Holliday junction branch migration complex subunit RuvA from Afipia carboxidovorans (strain ATCC 49405 / DSM 1227 / KCTC 32145 / OM5) (Oligotropha carboxidovorans).